Consider the following 460-residue polypeptide: MSARPQNVGIKAIEVYFPSQCVDQAELEKFDGVSEGKYTIGLGQTKMSFCDDREDIYSIALTTCSSLLRKYNIDPKSIGRLEVGTETLLDKSKSVKSVLMQLFAPHGNTNIEGVDTVNACYGGTNAVFNSINWVESSAWDGRDAIVVCGDIALYAKGAARPTGGAGAVAMLIGPDAPIVFEPGLRGSYVTHAYDFFKPDLTSEYPVVDGHFSLKCYTEAVDACYKAYAAREKVLKAKVQNGTNGVENDETKTPLDRFDYVLFHAPTCKLVQKSYGRMLYNDYLANPSHPAFAEVPSELRDLDYEKSFTDKTVEKTFMGLTKKTFAERVRPGLDVATLCGNMYTATVYAGLASLLSNVTFDPSQPKRVALFSYGSGLASSMFSVKIVGDVSGMVEKLDLHKRLNARTVLPPQTYDEMCILREHAHLKKNFKPTGNPDTLFPGTYYLTEIDDMFRRKYEIKA.

Catalysis depends on Glu86, which acts as the Proton donor/acceptor. The active-site Acyl-thioester intermediate is Cys120. The (3S)-3-hydroxy-3-methylglutaryl-CoA site is built by Cys120, Thr162, Ser212, His263, Lys272, Asn340, and Ser374. Catalysis depends on His263, which acts as the Proton donor/acceptor.

Belongs to the thiolase-like superfamily. HMG-CoA synthase family.

It catalyses the reaction acetoacetyl-CoA + acetyl-CoA + H2O = (3S)-3-hydroxy-3-methylglutaryl-CoA + CoA + H(+). The protein operates within metabolic intermediate biosynthesis; (R)-mevalonate biosynthesis; (R)-mevalonate from acetyl-CoA: step 2/3. Hydroxymethylglutaryl-CoA synthase; part of the first module of ergosterol biosynthesis pathway that includes the early steps of the pathway, conserved across all eukaryotes, and which results in the formation of mevalonate from acetyl-coenzyme A (acetyl-CoA). Erg13A and erg13B condense acetyl-CoA with acetoacetyl-CoA to form hydroxymethylglutaryl-CoA (HMG-CoA). The first module starts with the action of the cytosolic acetyl-CoA acetyltransferase erg10B that catalyzes the formation of acetoacetyl-CoA. The hydroxymethylglutaryl-CoA synthases erg13A and erg13B then condense acetyl-CoA with acetoacetyl-CoA to form HMG-CoA. The rate-limiting step of the early module is the reduction to mevalonate by the 3-hydroxy-3-methylglutaryl-coenzyme A (HMG-CoA) reductases hmg1 and hmg2. Mevalonate is also a precursor for the extracellular siderophore triacetylfusarinine C (TAFC). This Aspergillus fumigatus (strain ATCC MYA-4609 / CBS 101355 / FGSC A1100 / Af293) (Neosartorya fumigata) protein is Hydroxymethylglutaryl-CoA synthase erg13B.